The sequence spans 872 residues: Probably inactive leucine-rich repeat receptor-like protein kinase At5g06940 (872 aa).

The first 26 residues, 1 to 26 (MATRFKHQFSISLALTFFFFFTKTFS), serve as a signal peptide directing secretion. Residues 27 to 540 (FTENEELGNL…RSNFHKKGGK (514 aa)) are Extracellular-facing. Asparagine 55, asparagine 63, and asparagine 86 each carry an N-linked (GlcNAc...) asparagine glycan. LRR repeat units follow at residues 79-98 (SINL…ICDL), 99-122 (PYLT…LSRC), 123-146 (VTLE…ISEF), 147-169 (SSLK…DLGL), 171-193 (FNLQ…AIGK), 195-217 (SELV…SFLG), 219-243 (LDKL…FVGL), 244-267 (TSLR…LGPS), 269-292 (KNLV…ICSG), 294-316 (RLIN…IGEC), 317-340 (LSLE…LWKL), 341-365 (PRIK…SLAS), 367-389 (LEQV…GLVK), 391-412 (LYKF…FCDS), 413-435 (PVLS…LKNC), 436-459 (KKLV…LADL), 460-482 (HVLT…GLQN), and 484-506 (KLAL…LVSG). The N-linked (GlcNAc...) asparagine glycan is linked to asparagine 129. Asparagine 255 carries an N-linked (GlcNAc...) asparagine glycan. N-linked (GlcNAc...) asparagine glycosylation is present at asparagine 297. The N-linked (GlcNAc...) asparagine glycan is linked to asparagine 374. Asparagine 419 is a glycosylation site (N-linked (GlcNAc...) asparagine). Asparagine 489 carries an N-linked (GlcNAc...) asparagine glycan. The helical transmembrane segment at 541–561 (ALVLSLICLALAIATFLAVLY) threads the bilayer. The Cytoplasmic segment spans residues 562-872 (RYSRKKVQFK…ISSSVSPVSA (311 aa)). Threonine 585 bears the Phosphothreonine mark. Residues 589–863 (LMKVVNESCP…VKVIKLLEGI (275 aa)) enclose the Protein kinase domain. Residues 595–603 (ESCPSGSEV) and lysine 617 each bind ATP. A phosphotyrosine mark is found at tyrosine 662, tyrosine 699, tyrosine 754, and tyrosine 761.

It belongs to the protein kinase superfamily. Ser/Thr protein kinase family.

It is found in the membrane. The polypeptide is Probably inactive leucine-rich repeat receptor-like protein kinase At5g06940 (Arabidopsis thaliana (Mouse-ear cress)).